Reading from the N-terminus, the 405-residue chain is NADH-quinone oxidoreductase subunit D (405 aa).

It belongs to the complex I 49 kDa subunit family. As to quaternary structure, NDH-1 is composed of 14 different subunits. Subunits NuoB, C, D, E, F, and G constitute the peripheral sector of the complex.

The protein resides in the cell inner membrane. It carries out the reaction a quinone + NADH + 5 H(+)(in) = a quinol + NAD(+) + 4 H(+)(out). NDH-1 shuttles electrons from NADH, via FMN and iron-sulfur (Fe-S) centers, to quinones in the respiratory chain. The immediate electron acceptor for the enzyme in this species is believed to be ubiquinone. Couples the redox reaction to proton translocation (for every two electrons transferred, four hydrogen ions are translocated across the cytoplasmic membrane), and thus conserves the redox energy in a proton gradient. This is NADH-quinone oxidoreductase subunit D from Leptospira interrogans serogroup Icterohaemorrhagiae serovar copenhageni (strain Fiocruz L1-130).